The chain runs to 461 residues: Isthmin-1 (461 aa).

The signal sequence occupies residues 1–26 (MVRLAAELLLLLGLLLLTLHITVLRS). A glycan (N-linked (GlcNAc...) asparagine) is linked at asparagine 33. Residues 40–58 (QDSRVAENNVNADSSSSVQ) are compositionally biased toward polar residues. 3 disordered regions span residues 40–62 (QDSRVAENNVNADSSSSVQLGPG), 73–92 (ASQPWAQSPGTGGSLQRDGP), and 128–188 (EGSE…NFLK). Residues 131–141 (EPEKGMRKENK) are compositionally biased toward basic and acidic residues. The segment covering 156–165 (SSSSSSSSVS) has biased composition (low complexity). The 45-residue stretch at 215–259 (DGEGDWSAWSPCSVSCGNGNQKRTRSCGYACTATESRTCDMPSCP) folds into the TSP type-1 domain. Disulfide bonds link cysteine 226–cysteine 253, cysteine 230–cysteine 258, and cysteine 241–cysteine 245. Asparagine 282 is a glycosylation site (N-linked (GlcNAc...) asparagine). An AMOP domain is found at 286–449 (LFGVDTDSCE…QKCAENPQDE (164 aa)).

Belongs to the isthmin family.

Its subcellular location is the secreted. In terms of biological role, may specifically influence certain angiogenesis process. The polypeptide is Isthmin-1 (ism1) (Danio rerio (Zebrafish)).